An 822-amino-acid polypeptide reads, in one-letter code: Calpain-3 (822 aa).

The interval 1–36 (MPTVISASVAPRTGAEPRSPGPIAQAAQGKGTEAGG) is disordered. The Calpain catalytic domain occupies 74–418 (LFVDPEFPPD…FTKLEICNLT (345 aa)). Active-site residues include Cys-129, His-335, and Asn-359. The domain III stretch occupies residues 419-587 (ADALESDKLQ…KRNLSEEVEN (169 aa)). The linker stretch occupies residues 588–649 (TISVDRPVKK…LKPGNIDQES (62 aa)). The segment at 600-651 (PKPIIFGSDRANSNKELGVDQESEEGKDNTSPDKQAKSPQLKPGNIDQESKE) is disordered. Positions 623–635 (EEGKDNTSPDKQA) are enriched in basic and acidic residues. 4 EF-hand domains span residues 650-684 (KEQR…VVNK), 693-726 (FTLE…KKIK), 723-758 (KKIK…AGFH), and 788-822 (VRLE…TMYA). The domain IV stretch occupies residues 650-822 (KEQRQFRNIF…LEWLQLTMYA (173 aa)). Positions 663, 666, 668, 673, 706, 708, 710, 712, 717, 736, 738, 740, 742, 747, 801, 803, 805, and 807 each coordinate Ca(2+).

This sequence belongs to the peptidase C2 family. As to quaternary structure, homodimer; via EF-hand domain 4. Interacts with TTN/titin. Interacts with CMYA5; this interaction, which results in CMYA5 proteolysis, may protect CAPN3 from autolysis. Interacts with SIMC1. Interacts with UTP25; the interaction is required for CAPN3 translocation to the nucleolus. As to expression, skeletal muscle.

It localises to the cytoplasm. Its subcellular location is the nucleus. The protein resides in the nucleolus. The enzyme catalyses Broad endopeptidase activity.. With respect to regulation, activated by micromolar concentrations of calcium and inhibited by calpastatin. Functionally, calcium-regulated non-lysosomal thiol-protease. Proteolytically cleaves CTBP1. Mediates, with UTP25, the proteasome-independent degradation of p53/TP53. This chain is Calpain-3 (CAPN3), found in Ovis aries (Sheep).